Reading from the N-terminus, the 430-residue chain is MLYEKFEYNINNLIGNFGLSKIAIAVSGGSDSISLLYLANIWARKNNIELFVISVDHNLRPQSKQENYYIHTISSNLNRKYYNLSFDHQNNFSNLQERAREGRYDLMTNLCLELDVLVLLTAHHEDDYVENFCLRLERNSGIFGLSSSNIHWYNNIQIIRPLYNIPKSELVEYLVNHKIKWFEDESNLSDKYRRNIIRQKLFKEENYIKAEISLQQLKTNKLIEDELKPALISAIAEAVKIFEYGFTFLDLVKFDKFLNEVKAQIINFLLIMISGQSRSARFYSIAHILKLISQDINFKNTVHGCVIKRIQNELLIYREFGKKLPKSKILLDKSVIWDNRFCITKNQKTPDCVITYLSLADYKAIKKQLDLKHLKNLSCKNHNAILFTLPIIKILEKVIAIPHISYYDNDVWNFEVSFAPNFVSRFTHFC.

27–32 (SGGSDS) is a binding site for ATP.

It belongs to the tRNA(Ile)-lysidine synthase family.

Its subcellular location is the cytoplasm. It catalyses the reaction cytidine(34) in tRNA(Ile2) + L-lysine + ATP = lysidine(34) in tRNA(Ile2) + AMP + diphosphate + H(+). Functionally, ligates lysine onto the cytidine present at position 34 of the AUA codon-specific tRNA(Ile) that contains the anticodon CAU, in an ATP-dependent manner. Cytidine is converted to lysidine, thus changing the amino acid specificity of the tRNA from methionine to isoleucine. In Rickettsia prowazekii (strain Madrid E), this protein is tRNA(Ile)-lysidine synthase.